A 345-amino-acid chain; its full sequence is Acyl-CoA--sterol O-acyltransferase 1 (345 aa).

9 consecutive transmembrane segments (helical) span residues 1 to 21, 32 to 52, 54 to 74, 86 to 106, 120 to 140, 148 to 168, 231 to 251, 258 to 278, and 291 to 311; these read MASF…TFFI, LILF…IYSL, LLGI…LLFA, PLSL…QLSP, GPLI…AYEY, VVLT…LAAT, ILAA…IFFY, DWKM…EIAI, and AISQ…LFLP.

The protein belongs to the wax synthase family.

The protein resides in the membrane. In terms of biological role, involved in the esterification of cycloartenol. Not implicated in the formation of sterol esters in flowers or during seed maturation. Has a substrate preference toward saturated fatty acyl donors (16:0 &gt; 18:0 &gt; 16:1 &gt; 18:1). Does not require triacyglycerols (TAGs) as a fatty acyl donor, and is unable to acylate diacylglycerol to produce TAG. This Arabidopsis thaliana (Mouse-ear cress) protein is Acyl-CoA--sterol O-acyltransferase 1 (ASAT1).